The following is a 394-amino-acid chain: SVGFKAGVKDYRLTYYTPDYETLATDILAAFRVTPQPGVPPEEAGAAVAAESSTGTWTTVWTDGLTSLDRYKGRCYHIEPVAGEENQYIAYVAYPLDLFEEGSVTNMFTSIVGNVFGFKALRALRLEDLRIPPAYSKTFQGPPHGIQVERDKLNKYGRPLLGCTIKPKLGLSAKNYGRAVYECLRGGLDFTKDDENVNSQPFMRWRDRFLFCTEAIYKAQAETGEIKGHYLNATAGTSEEMIKRAVCARELGVPIVMHDYLTGGFTANTSLAHYCRDNGLLLHIHRAMHAVIDRQRNHGIHFRVLAKALRMSGGDHIHSGTVVGKLEGERDVTLGFVDLLRDDFIEKDRSRGIYFTQDWVSMPGVLPVASGGIHVWHMPALTEIFGDDSVLQFG.

The residue at position 5 (Lys-5) is an N6,N6,N6-trimethyllysine. Substrate is bound by residues Asn-114 and Thr-164. Lys-166 acts as the Proton acceptor in catalysis. Lys-168 serves as a coordination point for substrate. Mg(2+) contacts are provided by Lys-192, Asp-194, and Glu-195. At Lys-192 the chain carries N6-carboxylysine. His-285 (proton acceptor) is an active-site residue. Positions 286, 318, and 370 each coordinate substrate.

This sequence belongs to the RuBisCO large chain family. Type I subfamily. Heterohexadecamer of 8 large chains and 8 small chains. Requires Mg(2+) as cofactor.

It is found in the plastid. The protein localises to the chloroplast. It catalyses the reaction 2 (2R)-3-phosphoglycerate + 2 H(+) = D-ribulose 1,5-bisphosphate + CO2 + H2O. The enzyme catalyses D-ribulose 1,5-bisphosphate + O2 = 2-phosphoglycolate + (2R)-3-phosphoglycerate + 2 H(+). Its function is as follows. RuBisCO catalyzes two reactions: the carboxylation of D-ribulose 1,5-bisphosphate, the primary event in carbon dioxide fixation, as well as the oxidative fragmentation of the pentose substrate in the photorespiration process. Both reactions occur simultaneously and in competition at the same active site. In Victoria cruziana (Santa Cruz water lily), this protein is Ribulose bisphosphate carboxylase large chain (rbcL).